Consider the following 264-residue polypeptide: Phycocyanobilin:ferredoxin oxidoreductase (264 aa).

This sequence belongs to the HY2 family.

The catalysed reaction is (2R,3Z)-phycocyanobilin + 4 oxidized [2Fe-2S]-[ferredoxin] = biliverdin IXalpha + 4 reduced [2Fe-2S]-[ferredoxin] + 4 H(+). Functionally, catalyzes the four-electron reduction of biliverdin IX-alpha (2-electron reduction at both the A and D rings); the reaction proceeds via an isolatable 2-electron intermediate, 181,182-dihydrobiliverdin. This Prochlorococcus marinus (strain MIT 9303) protein is Phycocyanobilin:ferredoxin oxidoreductase.